Reading from the N-terminus, the 356-residue chain is S-adenosylmethionine:tRNA ribosyltransferase-isomerase (356 aa).

Belongs to the QueA family. As to quaternary structure, monomer.

Its subcellular location is the cytoplasm. It catalyses the reaction 7-aminomethyl-7-carbaguanosine(34) in tRNA + S-adenosyl-L-methionine = epoxyqueuosine(34) in tRNA + adenine + L-methionine + 2 H(+). Its pathway is tRNA modification; tRNA-queuosine biosynthesis. Its function is as follows. Transfers and isomerizes the ribose moiety from AdoMet to the 7-aminomethyl group of 7-deazaguanine (preQ1-tRNA) to give epoxyqueuosine (oQ-tRNA). The protein is S-adenosylmethionine:tRNA ribosyltransferase-isomerase of Escherichia coli O8 (strain IAI1).